A 335-amino-acid polypeptide reads, in one-letter code: Serpentine receptor class gamma-11 (335 aa).

The next 7 membrane-spanning stretches (helical) occupy residues 33–53 (FLQIAYLIPGGILNILLLYTI), 66–86 (FFLIYSTDCFVSFSMIFLDII), 98–118 (PIIAPMFYEPLIGFKIMMIVL), 154–174 (LKYLIILVFVIPFSIDWNLII), 202–222 (FQLIFITIALLFTIVCTSVIF), 242–262 (GTAYISMSFIILVVFQFLFAF), and 271–291 (TIFGYSLLSYDILNVGSPIIM).

It belongs to the nematode receptor-like protein srg family.

It localises to the membrane. This chain is Serpentine receptor class gamma-11 (srg-11), found in Caenorhabditis elegans.